A 270-amino-acid polypeptide reads, in one-letter code: Beta carbonic anhydrase 1 (270 aa).

Zn(2+)-binding residues include C39, D41, H105, and C108.

It belongs to the beta-class carbonic anhydrase family. In terms of assembly, oligomer. It depends on Zn(2+) as a cofactor.

It carries out the reaction hydrogencarbonate + H(+) = CO2 + H2O. Reversible hydration of carbon dioxide. The sequence is that of Beta carbonic anhydrase 1 (bca-1) from Caenorhabditis elegans.